The sequence spans 81 residues: ATP synthase subunit C, plastid (81 aa).

The next 2 helical transmembrane spans lie at Pro-3–Gly-23 and Glu-61–Ile-81.

Belongs to the ATPase C chain family. F-type ATPases have 2 components, F(1) - the catalytic core - and F(0) - the membrane proton channel. F(1) has five subunits: alpha(3), beta(3), gamma(1), delta(1), epsilon(1). F(0) has four main subunits: a(1), b(1), b'(1) and c(10-14). The alpha and beta chains form an alternating ring which encloses part of the gamma chain. F(1) is attached to F(0) by a central stalk formed by the gamma and epsilon chains, while a peripheral stalk is formed by the delta, b and b' chains.

It is found in the plastid membrane. In terms of biological role, f(1)F(0) ATP synthase produces ATP from ADP in the presence of a proton or sodium gradient. F-type ATPases consist of two structural domains, F(1) containing the extramembraneous catalytic core and F(0) containing the membrane proton channel, linked together by a central stalk and a peripheral stalk. During catalysis, ATP synthesis in the catalytic domain of F(1) is coupled via a rotary mechanism of the central stalk subunits to proton translocation. Key component of the F(0) channel; it plays a direct role in translocation across the membrane. A homomeric c-ring of between 10-14 subunits forms the central stalk rotor element with the F(1) delta and epsilon subunits. The polypeptide is ATP synthase subunit C, plastid (Aneura mirabilis (Parasitic liverwort)).